Here is a 454-residue protein sequence, read N- to C-terminus: NADP-specific glutamate dehydrogenase (454 aa).

Ser-2 is subject to N-acetylserine. Residue Lys-114 is part of the active site.

Belongs to the Glu/Leu/Phe/Val dehydrogenases family. In terms of assembly, homohexamer.

It catalyses the reaction L-glutamate + NADP(+) + H2O = 2-oxoglutarate + NH4(+) + NADPH + H(+). This chain is NADP-specific glutamate dehydrogenase (GDH), found in Neurospora intermedia.